The following is a 267-amino-acid chain: Thiamine pyrophosphokinase 3 (267 aa).

Belongs to the thiamine pyrophosphokinase family.

The protein resides in the cytoplasm. It is found in the cytosol. It carries out the reaction thiamine + ATP = thiamine diphosphate + AMP + H(+). It participates in cofactor biosynthesis; thiamine diphosphate biosynthesis; thiamine diphosphate from thiamine: step 1/1. Catalyzes the phosphorylation of thiamine to thiamine pyrophosphate (TPP). TPP is an active cofactor for enzymes involved in glycolysis and energy production. Plant leaves require high levels of TPP for photosynthesis and carbohydrate metabolism. In Oryza sativa subsp. japonica (Rice), this protein is Thiamine pyrophosphokinase 3 (TPK3).